The sequence spans 248 residues: Octanoyltransferase (248 aa).

One can recognise a BPL/LPL catalytic domain in the interval 53–238 (ADTGDEIWVV…NLDGASAAAD (186 aa)). Residues 93–100 (RGGQITYH), 165–167 (ALG), and 178–180 (GLS) each bind substrate. Cysteine 196 functions as the Acyl-thioester intermediate in the catalytic mechanism.

The protein belongs to the LipB family.

The protein localises to the cytoplasm. The enzyme catalyses octanoyl-[ACP] + L-lysyl-[protein] = N(6)-octanoyl-L-lysyl-[protein] + holo-[ACP] + H(+). It functions in the pathway protein modification; protein lipoylation via endogenous pathway; protein N(6)-(lipoyl)lysine from octanoyl-[acyl-carrier-protein]: step 1/2. Functionally, catalyzes the transfer of endogenously produced octanoic acid from octanoyl-acyl-carrier-protein onto the lipoyl domains of lipoate-dependent enzymes. Lipoyl-ACP can also act as a substrate although octanoyl-ACP is likely to be the physiological substrate. The sequence is that of Octanoyltransferase from Burkholderia orbicola (strain MC0-3).